The chain runs to 571 residues: GABA-specific permease (571 aa).

Residues 1–73 (MSMSSKNENK…IGYKQELKRQ (73 aa)) are Cytoplasmic-facing. The chain crosses the membrane as a helical span at residues 74 to 94 (FSTLQVFGIAFSIMGLLPSIA). Topologically, residues 95-105 (SVMGGGLGGGP) are vacuolar. A helical transmembrane segment spans residues 106-126 (ATLVWGWFVAAFFILLVGITM). The Cytoplasmic portion of the chain corresponds to 127-153 (AEHASSIPTAGGLYYWTYYYAPEGYKE). A helical membrane pass occupies residues 154–174 (IISFIIGCSNSLALAAGVCSI). Residues 175-198 (DYGLAEEIAAAVTLTKDGNFEVTS) are Vacuolar-facing. A helical transmembrane segment spans residues 199-219 (GKLYGIFAGAVVVMCICTCVA). The Cytoplasmic portion of the chain corresponds to 220–228 (SGAIARLQT). Residues 229-249 (LSIFANLFIIVLLFIALPIGT) traverse the membrane as a helical segment. The Vacuolar segment spans residues 250 to 271 (KHRMGGFNDGDFIFGKYENLSD). A helical transmembrane segment spans residues 272–292 (WNNGWQFCLAGFMPAVWTIGS). Over 293-312 (FDSCVHQSEEAKDAKKSVPI) the chain is Cytoplasmic. A helical membrane pass occupies residues 313–333 (GIISSIAVCWILGWLIIICLM). The Vacuolar portion of the chain corresponds to 334–364 (ACINPDIDSVLDSKYGFALAQIIYDSLGKKW). Residues 365–385 (AIAFMSLIAFCQFLMGASITT) traverse the membrane as a helical segment. Over 386-416 (AVSRQVWAFSRDNGLPLSKYIKRVDSKYSVP) the chain is Cytoplasmic. A helical membrane pass occupies residues 417–437 (FFAILAACVGSLILGLLCLID). The Vacuolar segment spans residues 438-441 (DAAT). Residues 442–462 (DALFSLAVAGNNLAWSTPTVF) form a helical membrane-spanning segment. Residues 463-482 (RLTSGRDLFRPGPFYLGKIW) are Cytoplasmic-facing. The helical transmembrane segment at 483 to 503 (SPIVAWTGVAFQLFIIILVMF) threads the bilayer. The Vacuolar segment spans residues 504–514 (PSQQHGITKST). Residues 515–535 (MNYACVIGPGIWILAGIYYKV) form a helical membrane-spanning segment. At 536–571 (YKKKYYHGPATNLSDDDYTEAVGADVIDTIMSKQEP) the chain is on the cytoplasmic side.

This sequence belongs to the amino acid-polyamine-organocation (APC) superfamily. Amino acid/choline transporter (ACT) (TC 2.A.3.4) family.

Its subcellular location is the vacuole membrane. In terms of biological role, required for high-affinity, high-specificity GABA transport. Also transports putrescine. This Saccharomyces cerevisiae (strain ATCC 204508 / S288c) (Baker's yeast) protein is GABA-specific permease (UGA4).